The chain runs to 442 residues: MPRSLSNEQFSVDLEESPGCIVSALVKVSPEVLNKLNKQALKKIKKEITLPGFRKGKAPDDVIASRYPTNVRKELGELVTQDAYHALSTVGDRRPLSPKAVRSNSITQFDLQEGAKVEFSYEAFPAISDLPWENLSLPQEEAASEISDSDIEKGLTNIGMFFATKTPVERPSQEGDFISISLHVSKSNDENASSAAIFENKYFKLSEEEMTDAFKEKFLGISTGHRVVETITSPEIQSFLRGDTLTFTVNAVIEVSIPEIDDEKARQLQAESLDDLKAKLRIQLEKQAKDKQLQKRFSEAEDALAMLVDFELPTSLLEERISLITREKLLNARLIQYCSDEELEKRKSELIKEAEEDATKALKLLFLTHKIFSDEKLTISREELQYMMDVCSRERFGQQPPKDISNDTLQELVMSARDRLTYSKAIEHVLRKAELLASTPSA.

The 84-residue stretch at 175–258 folds into the PPIase FKBP-type domain; that stretch reads GDFISISLHV…VNAVIEVSIP (84 aa).

The protein belongs to the FKBP-type PPIase family. Tig subfamily.

Its subcellular location is the cytoplasm. It carries out the reaction [protein]-peptidylproline (omega=180) = [protein]-peptidylproline (omega=0). Functionally, involved in protein export. Acts as a chaperone by maintaining the newly synthesized protein in an open conformation. Functions as a peptidyl-prolyl cis-trans isomerase. In Chlamydia pneumoniae (Chlamydophila pneumoniae), this protein is Trigger factor (tig).